The sequence spans 206 residues: Pyridoxine/pyridoxamine 5'-phosphate oxidase (206 aa).

FMN-binding positions include 53-58, 68-69, K75, and Q97; these read RMVLLK and YT. K58 lines the substrate pocket. Substrate-binding residues include Y115, R119, and S123. FMN is bound by residues 132–133 and W177; that span reads QS. 183 to 185 is a binding site for substrate; the sequence is RLH. Residue R187 participates in FMN binding.

Belongs to the pyridoxamine 5'-phosphate oxidase family. Homodimer. Requires FMN as cofactor.

The catalysed reaction is pyridoxamine 5'-phosphate + O2 + H2O = pyridoxal 5'-phosphate + H2O2 + NH4(+). The enzyme catalyses pyridoxine 5'-phosphate + O2 = pyridoxal 5'-phosphate + H2O2. It participates in cofactor metabolism; pyridoxal 5'-phosphate salvage; pyridoxal 5'-phosphate from pyridoxamine 5'-phosphate: step 1/1. It functions in the pathway cofactor metabolism; pyridoxal 5'-phosphate salvage; pyridoxal 5'-phosphate from pyridoxine 5'-phosphate: step 1/1. In terms of biological role, catalyzes the oxidation of either pyridoxine 5'-phosphate (PNP) or pyridoxamine 5'-phosphate (PMP) into pyridoxal 5'-phosphate (PLP). In Rhizobium etli (strain ATCC 51251 / DSM 11541 / JCM 21823 / NBRC 15573 / CFN 42), this protein is Pyridoxine/pyridoxamine 5'-phosphate oxidase.